The primary structure comprises 147 residues: Protein archease (147 aa).

Ca(2+)-binding residues include Asp-17, Asp-146, and Ile-147.

This sequence belongs to the archease family.

Functionally, activates the tRNA-splicing ligase complex by facilitating the enzymatic turnover of catalytic subunit RtcB. Acts by promoting the guanylylation of RtcB, a key intermediate step in tRNA ligation. Can also alter the NTP specificity of RtcB such that ATP, dGTP or ITP is used efficiently. The polypeptide is Protein archease (Pyrobaculum neutrophilum (strain DSM 2338 / JCM 9278 / NBRC 100436 / V24Sta) (Thermoproteus neutrophilus)).